Consider the following 117-residue polypeptide: Protein RALF-like 32 (117 aa).

Residues 1–26 form the signal peptide; the sequence is MEIKPSRIFSTITIFFLCLLLAHVTS. Residues 27 to 64 constitute a propeptide, removed in mature form; that stretch reads KASSSSLCNGSVAECSSMVETEEMSVIMESWSSQRLTE. N-linked (GlcNAc...) asparagine glycosylation is present at N35. The tract at residues 77–107 is disordered; the sequence is RNQPACDGGKRGESYSTQCLPPPSNPYSRGC. Cystine bridges form between C82–C95 and C107–C113.

The protein belongs to the plant rapid alkalinization factor (RALF) family. Proteolytically cleaved, probably by S1P, a subtilisin-like serine protease (subtilase).

Its subcellular location is the secreted. Functionally, cell signaling peptide that may regulate plant stress, growth, and development. Mediates a rapid alkalinization of extracellular space by mediating a transient increase in the cytoplasmic Ca(2+) concentration leading to a calcium-dependent signaling events through a cell surface receptor and a concomitant activation of some intracellular mitogen-activated protein kinases. The protein is Protein RALF-like 32 (RALFL32) of Arabidopsis thaliana (Mouse-ear cress).